An 80-amino-acid chain; its full sequence is uncharacterized protein (80 aa).

Functionally, essential for virus function. This is an uncharacterized protein from Sulfolobus spindle-shape virus 1 (SSV1).